The following is a 792-amino-acid chain: Pentatricopeptide repeat-containing protein At4g30700 (792 aa).

PPR repeat units follow at residues 51-81 (DISLLTKLTQRLSDLGAIYYARDIFLSVQRP), 82-117 (DVFLFNVLMRGFSVNESPHSSLSVFAHLRKSTDLKP), 118-152 (NSSTYAFAISAASGFRDDRAGRVIHGQAVVDGCDS), 153-183 (ELLLGSNIVKMYFKFWRVEDARKVFDRMPEK), 184-218 (DTILWNTMISGYRKNEMYVESIQVFRDLINESCTR), 220-254 (DTTTLLDILPAVAELQELRLGMQIHSLATKTGCYS), 255-285 (HDYVLTGFISLYSKCGKIKMGSALFREFRKP), 286-320 (DIVAYNAMIHGYTSNGETELSLSLFKELMLSGARL), 321-352 (RSSTLVSLVPVSGHLMLIYAIHGYCLKSNFLS), 353-383 (HASVSTALTTVYSKLNEIESARKLFDESPEK), 384-418 (SLPSWNAMISGYTQNGLTEDAISLFREMQKSEFSP), 419-453 (NPVTITCILSACAQLGALSLGKWVHDLVRSTDFES), 454-484 (SIYVSTALIGMYAKCGSIAEARRLFDLMTKK), 485-519 (NEVTWNTMISGYGLHGQGQEALNIFYEMLNSGITP), 520-555 (TPVTFLCVLYACSHAGLVKEGDEIFNSMIHRYGFEP), and 556-586 (SVKHYACMVDILGRAGHLQRALQFIEAMSIE). The tract at residues 591 to 666 (VWETLLGACR…APGYTLIEIG (76 aa)) is type E motif. Residues 667–697 (ETPHVFTSGDQSHPQVKEIYEKLEKLEGKMR) are type E(+) motif. The interval 698–792 (EAGYQPETEL…DGVCSCGDYW (95 aa)) is type DYW motif.

This sequence belongs to the PPR family. PCMP-H subfamily.

This chain is Pentatricopeptide repeat-containing protein At4g30700 (DYW9), found in Arabidopsis thaliana (Mouse-ear cress).